The sequence spans 164 residues: Envelope glycoprotein L (164 aa).

The first 24 residues, 1–24, serve as a signal peptide directing secretion; that stretch reads MRSLDRYAIFILLACGLLWRPCLS.

It belongs to the herpesviridae glycoprotein L family. Interacts with glycoprotein H (gH); this interaction is necessary for the correct processing and cell surface expression of gH. The heterodimer gH/gL seems to interact with gB trimers during fusion.

The protein localises to the virion membrane. The protein resides in the host cell membrane. It is found in the host Golgi apparatus. It localises to the host trans-Golgi network. Its function is as follows. The heterodimer glycoprotein H-glycoprotein L is required for the fusion of viral and plasma membranes leading to virus entry into the host cell. Acts as a functional inhibitor of gH and maintains gH in an inhibited form. Upon binding to host integrins, gL dissociates from gH leading to activation of the viral fusion glycoproteins gB and gH. The chain is Envelope glycoprotein L from Equine herpesvirus 2 (strain 86/87) (EHV-2).